A 242-amino-acid polypeptide reads, in one-letter code: Small ribosomal subunit protein uS2 (242 aa).

The protein belongs to the universal ribosomal protein uS2 family.

The protein is Small ribosomal subunit protein uS2 of Vibrio parahaemolyticus serotype O3:K6 (strain RIMD 2210633).